The following is a 243-amino-acid chain: Vimentin A2 (243 aa).

Residues 1 to 22 (GFSLQDELDFLKKLHDEELADV) form a coil 1B region. In terms of domain architecture, IF rod spans 1-188 (GFSLQDELDF…KLLEGEESRI (188 aa)). The tract at residues 23 to 45 (QAQIQDQQVQVDMDMAKPDLTAA) is linker 12. The segment at 46-184 (LRDVRLQYEN…ATYRKLLEGE (139 aa)) is coil 2. Residues 185-243 (ESRITTPLPNLSSFNLRDAILETKPILENTFSKKVLIKTIETRDGEVINESTQNHDDLE) form a tail region.

This sequence belongs to the intermediate filament family. Homomer. Post-translationally, one of the most prominent phosphoproteins in various cells of mesenchymal origin. Phosphorylation is enhanced during cell division, at which time vimentin filaments are significantly reorganized. In terms of tissue distribution, expressed in low amounts in retina, optic nerve, and brain and in higher amounts in spinal cord.

Functionally, vimentins are class-III intermediate filaments found in various non-epithelial cells, especially mesenchymal cells. Vimentin is attached to the nucleus, endoplasmic reticulum, and mitochondria, either laterally or terminally. The protein is Vimentin A2 of Carassius auratus (Goldfish).